Reading from the N-terminus, the 157-residue chain is 2-C-methyl-D-erythritol 2,4-cyclodiphosphate synthase (157 aa).

2 residues coordinate a divalent metal cation: aspartate 8 and histidine 10. 4-CDP-2-C-methyl-D-erythritol 2-phosphate-binding positions include 8–10 and 34–35; these read DVH and HS. Histidine 42 serves as a coordination point for a divalent metal cation. Residues 56 to 58, 61 to 65, 132 to 135, and phenylalanine 139 contribute to the 4-CDP-2-C-methyl-D-erythritol 2-phosphate site; these read DIG, FPDTD, and TTEE.

It belongs to the IspF family. As to quaternary structure, homotrimer. The cofactor is a divalent metal cation.

It catalyses the reaction 4-CDP-2-C-methyl-D-erythritol 2-phosphate = 2-C-methyl-D-erythritol 2,4-cyclic diphosphate + CMP. It functions in the pathway isoprenoid biosynthesis; isopentenyl diphosphate biosynthesis via DXP pathway; isopentenyl diphosphate from 1-deoxy-D-xylulose 5-phosphate: step 4/6. Its function is as follows. Involved in the biosynthesis of isopentenyl diphosphate (IPP) and dimethylallyl diphosphate (DMAPP), two major building blocks of isoprenoid compounds. Catalyzes the conversion of 4-diphosphocytidyl-2-C-methyl-D-erythritol 2-phosphate (CDP-ME2P) to 2-C-methyl-D-erythritol 2,4-cyclodiphosphate (ME-CPP) with a corresponding release of cytidine 5-monophosphate (CMP). This is 2-C-methyl-D-erythritol 2,4-cyclodiphosphate synthase from Clostridium botulinum (strain Eklund 17B / Type B).